Reading from the N-terminus, the 101-residue chain is Small ribosomal subunit protein uS14A (101 aa).

2 disordered regions span residues 1–21 and 49–73; these read MAKK…AHHA and QRLP…PRGT. 2 stretches are compositionally biased toward basic and acidic residues: residues 8–21 and 61–70; these read AKNE…AHHA and RNRDAADGRP.

The protein belongs to the universal ribosomal protein uS14 family. As to quaternary structure, part of the 30S ribosomal subunit. Contacts proteins S3 and S10.

Functionally, binds 16S rRNA, required for the assembly of 30S particles and may also be responsible for determining the conformation of the 16S rRNA at the A site. This is Small ribosomal subunit protein uS14A from Kineococcus radiotolerans (strain ATCC BAA-149 / DSM 14245 / SRS30216).